Reading from the N-terminus, the 492-residue chain is Protein adenylyltransferase Fic (492 aa).

The span at 1-17 shows a compositional bias: low complexity; it reads MCMEAEPPSPPAQQQEQ. The segment at 1 to 21 is disordered; it reads MCMEAEPPSPPAQQQEQVNPP. The helical transmembrane segment at 33–55 threads the bilayer; it reads LYRLVLLFVAGSLAAWTFHALSS. TPR repeat units follow at residues 118–151 and 152–186; these read ALGALRMAQDLYLAGKDDKAARLFEHALALAPRH and PEVLLRYGEFLEHNQRNIVLADQYYFQALTISPSN. The short motif at 243-248 is the Inhibitory (S/T)XXXE(G/N) motif element; sequence SVGIEG. Residues E247 and 328 to 331 each bind ATP; that span reads VGGH. The 136-residue stretch at 297–432 folds into the Fido domain; that stretch reads ITIKDILELH…IRPFVRFIAD (136 aa). H375 is an active-site residue. ATP is bound by residues 379 to 386, 411 to 412, and N419; these read DGNGRTSR and YY.

Belongs to the fic family. Homodimer.

It localises to the membrane. It catalyses the reaction L-tyrosyl-[protein] + ATP = O-(5'-adenylyl)-L-tyrosyl-[protein] + diphosphate. It carries out the reaction L-threonyl-[protein] + ATP = 3-O-(5'-adenylyl)-L-threonyl-[protein] + diphosphate. The enzyme catalyses 3-O-(5'-adenylyl)-L-threonyl-[protein] + H2O = L-threonyl-[protein] + AMP + H(+). The side chain of Glu-247 determines which of the two opposing activities (AMPylase or de-AMPylase) will take place. In response to endoplasmic reticulum stress, mediates de-AMPylase activity. Adenylyltransferase activity is inhibited by the inhibitory helix present at the N-terminus: Glu-247 binds ATP and competes with ATP-binding at Arg-386, thereby preventing adenylyltransferase activity. In unstressed cells, disengagement of Glu-247 promotes adenylyltransferase activity. Activation dissociates ATP-binding from Glu-247, allowing ordered binding of the entire ATP moiety with the alpha-phosphate in an orientation that is productive for accepting an incoming target hydroxyl side chain. Functionally, protein that can both mediate the addition of adenosine 5'-monophosphate (AMP) to specific residues of target proteins (AMPylation), and the removal of the same modification from target proteins (de-AMPylation), depending on the context. The side chain of Glu-247 determines which of the two opposing activities (AMPylase or de-AMPylase) will take place. Acts as a key regulator of the unfolded protein response (UPR) by mediating AMPylation or de-AMPylation of Hsc70-3/BiP. In unstressed cells, acts as an adenylyltransferase by mediating AMPylation of Hsc70-3/BiP at 'Thr-518', thereby inactivating it. In response to endoplasmic reticulum stress, acts as a phosphodiesterase by mediating removal of ATP (de-AMPylation) from Hsc70-3/BiP at 'Thr-518', leading to restore HSPA5/BiP activity. The chain is Protein adenylyltransferase Fic from Drosophila simulans (Fruit fly).